Here is a 274-residue protein sequence, read N- to C-terminus: Pantothenate synthetase (274 aa).

26–33 (MGNLHAGH) lines the ATP pocket. H33 functions as the Proton donor in the catalytic mechanism. Q57 lines the (R)-pantoate pocket. Beta-alanine is bound at residue Q57. 143–146 (GKKD) contacts ATP. Residue Q149 participates in (R)-pantoate binding. Residues V172 and 180–183 (LSSR) each bind ATP.

It belongs to the pantothenate synthetase family. In terms of assembly, homodimer.

The protein resides in the cytoplasm. It carries out the reaction (R)-pantoate + beta-alanine + ATP = (R)-pantothenate + AMP + diphosphate + H(+). It functions in the pathway cofactor biosynthesis; (R)-pantothenate biosynthesis; (R)-pantothenate from (R)-pantoate and beta-alanine: step 1/1. Catalyzes the condensation of pantoate with beta-alanine in an ATP-dependent reaction via a pantoyl-adenylate intermediate. The protein is Pantothenate synthetase of Dechloromonas aromatica (strain RCB).